We begin with the raw amino-acid sequence, 71 residues long: Large ribosomal subunit protein uL29 (71 aa).

This sequence belongs to the universal ribosomal protein uL29 family.

The polypeptide is Large ribosomal subunit protein uL29 (rpl29) (Halobacterium salinarum (strain ATCC 700922 / JCM 11081 / NRC-1) (Halobacterium halobium)).